We begin with the raw amino-acid sequence, 125 residues long: Protein ApaG (125 aa).

Residues 1 to 125 (MINSPRVCIQ…FRLAVPTLIH (125 aa)) enclose the ApaG domain.

The chain is Protein ApaG from Citrobacter koseri (strain ATCC BAA-895 / CDC 4225-83 / SGSC4696).